The sequence spans 256 residues: Phosphatidylglycerol--prolipoprotein diacylglyceryl transferase (256 aa).

3 helical membrane-spanning segments follow: residues 19 to 39, 56 to 76, and 91 to 111; these read VHWYGLMYLIGFIGAWLLGYW, LIFYSALGVILGGRVGYMLFY, and IWEGGMSFHGGLLGVVIAAWL. Residue Arg-139 participates in a 1,2-diacyl-sn-glycero-3-phospho-(1'-sn-glycerol) binding. Residues 231 to 251 form a helical membrane-spanning segment; the sequence is FGWLTMGQVLSIPMLLIGIWL.

It belongs to the Lgt family.

The protein resides in the cell inner membrane. It catalyses the reaction L-cysteinyl-[prolipoprotein] + a 1,2-diacyl-sn-glycero-3-phospho-(1'-sn-glycerol) = an S-1,2-diacyl-sn-glyceryl-L-cysteinyl-[prolipoprotein] + sn-glycerol 1-phosphate + H(+). It functions in the pathway protein modification; lipoprotein biosynthesis (diacylglyceryl transfer). Functionally, catalyzes the transfer of the diacylglyceryl group from phosphatidylglycerol to the sulfhydryl group of the N-terminal cysteine of a prolipoprotein, the first step in the formation of mature lipoproteins. The sequence is that of Phosphatidylglycerol--prolipoprotein diacylglyceryl transferase from Legionella pneumophila (strain Corby).